The following is a 588-amino-acid chain: Beta-(1--&gt;2)glucan export ATP-binding/permease protein NdvA (588 aa).

The region spanning 21–301 (VAVVVIANVI…MRQFVTQIFE (281 aa)) is the ABC transmembrane type-1 domain. The next 6 membrane-spanning stretches (helical) occupy residues 22–42 (AVVV…PVLF), 57–77 (PILI…VAVA), 136–156 (THLA…AMDL), 158–178 (LSFV…WVMG), 248–268 (TAST…VKNG), and 272–292 (VGDV…LDQM). Residues 335 to 569 (VEFRNINFGF…GGRFTSLLRT (235 aa)) form the ABC transporter domain. 368–375 (GPTGAGKT) is an ATP binding site.

It belongs to the ABC transporter superfamily. Beta-(1--&gt;2)glucan exporter (TC 3.A.1.108.1) family. As to quaternary structure, homodimer.

It localises to the cell inner membrane. The catalysed reaction is [(1-&gt;2)-beta-D-glucosyl](n)(in) + ATP + H2O = [(1-&gt;2)-beta-D-glucosyl](n)(out) + ADP + phosphate + H(+). Involved in beta-(1--&gt;2)glucan export which is required for crown gall tumor formation. Transmembrane domains (TMD) form a pore in the inner membrane and the ATP-binding domain (NBD) is responsible for energy generation. This Rhizobium radiobacter (Agrobacterium tumefaciens) protein is Beta-(1--&gt;2)glucan export ATP-binding/permease protein NdvA.